The chain runs to 24 residues: Conotoxin PIVF (24 aa).

3 disulfides stabilise this stretch: Cys2-Cys10, Cys3-Cys15, and Cys13-Cys19. Lys24 bears the Lysine amide mark.

Belongs to the conotoxin A superfamily. In terms of tissue distribution, expressed by the venom duct.

The protein resides in the secreted. Functionally, probable neurotoxin with ion channel inhibitor activity. In vivo, elicits dose-dependently excitatory activity upon injection into fish. Its action is slowly reversible. In Conus purpurascens (Purple cone), this protein is Conotoxin PIVF.